Reading from the N-terminus, the 56-residue chain is Small ribosomal subunit protein uS14 (56 aa).

Positions 21, 24, 39, and 42 each coordinate Zn(2+).

It belongs to the universal ribosomal protein uS14 family. Zinc-binding uS14 subfamily. As to quaternary structure, part of the 30S ribosomal subunit. The cofactor is Zn(2+).

Its function is as follows. Binds 16S rRNA, required for the assembly of 30S particles. This Pyrococcus furiosus (strain ATCC 43587 / DSM 3638 / JCM 8422 / Vc1) protein is Small ribosomal subunit protein uS14.